The following is an 88-amino-acid chain: MANIPSAKKRARQAEKRRKHNQSQRSMMRTYIKRVVNAIKAGDKAQAEEAYKVAVPVIDRMATRGLIHKNKAARHKSRLNQHLRNLQG.

The interval 1-27 is disordered; the sequence is MANIPSAKKRARQAEKRRKHNQSQRSM. Over residues 7–22 the composition is skewed to basic residues; sequence AKKRARQAEKRRKHNQ.

It belongs to the bacterial ribosomal protein bS20 family.

In terms of biological role, binds directly to 16S ribosomal RNA. The protein is Small ribosomal subunit protein bS20 of Alkalilimnicola ehrlichii (strain ATCC BAA-1101 / DSM 17681 / MLHE-1).